The chain runs to 172 residues: MKLGPGKKAPDEINVFIEIPMGSNIKYEYDEEEDIIKVDRVLYTSMVYPFNYGFIPETLEEDGDPLDVLVLGNYSLMPGTVIEARPIGMIYMRDEEGEDAKVIAVPRNKTDPSFSNINDVKDLPEAIRNKIVHFFEHYKELEPNKWVKISGWGSVAEAKERIKKAIERKKQG.

Substrate-binding residues include Lys-26, Arg-40, and Tyr-52. Mg(2+) is bound by residues Asp-62, Asp-67, and Asp-99. Residue Tyr-138 participates in substrate binding.

This sequence belongs to the PPase family. Homohexamer. It depends on Mg(2+) as a cofactor.

The protein resides in the cytoplasm. It catalyses the reaction diphosphate + H2O = 2 phosphate + H(+). In terms of biological role, catalyzes the hydrolysis of inorganic pyrophosphate (PPi) forming two phosphate ions. The protein is Inorganic pyrophosphatase of Saccharolobus solfataricus (strain ATCC 35092 / DSM 1617 / JCM 11322 / P2) (Sulfolobus solfataricus).